A 254-amino-acid chain; its full sequence is Putative biopolymer transport protein ExbB-like 1 (254 aa).

3 helical membrane passes run 39–59 (GGVV…TAFE), 141–161 (LETI…TGLI), and 185–205 (IGEA…ALLV).

Belongs to the ExbB/TolQ family.

The protein localises to the cell inner membrane. Its function is as follows. Involved in the TonB-dependent energy-dependent transport of various receptor-bound substrates. Protects ExbD from proteolytic degradation and functionally stabilizes TonB. This is Putative biopolymer transport protein ExbB-like 1 from Synechocystis sp. (strain ATCC 27184 / PCC 6803 / Kazusa).